Here is a 226-residue protein sequence, read N- to C-terminus: Putative integrase V10 (226 aa).

Catalysis depends on residues Arg97, His174, and Arg177. Tyr210 functions as the O-(3'-phospho-DNA)-tyrosine intermediate in the catalytic mechanism.

Belongs to the 'phage' integrase family.

May catalyze site-specific integration of viral genome into host or helper virus DNA. The sequence is that of Putative integrase V10 from Acanthamoeba polyphaga (Amoeba).